Here is a 141-residue protein sequence, read N- to C-terminus: Nucleoside diphosphate kinase (141 aa).

The ATP site is built by Lys11, Phe59, Arg87, Thr93, Arg104, and Asn114. Catalysis depends on His117, which acts as the Pros-phosphohistidine intermediate.

Belongs to the NDK family. Homotetramer. Mg(2+) serves as cofactor.

The protein resides in the cytoplasm. It carries out the reaction a 2'-deoxyribonucleoside 5'-diphosphate + ATP = a 2'-deoxyribonucleoside 5'-triphosphate + ADP. It catalyses the reaction a ribonucleoside 5'-diphosphate + ATP = a ribonucleoside 5'-triphosphate + ADP. Its function is as follows. Major role in the synthesis of nucleoside triphosphates other than ATP. The ATP gamma phosphate is transferred to the NDP beta phosphate via a ping-pong mechanism, using a phosphorylated active-site intermediate. The polypeptide is Nucleoside diphosphate kinase (Xanthomonas axonopodis pv. citri (strain 306)).